The chain runs to 183 residues: 2-hydroxy-1,4-benzoquinone reductase (183 aa).

Residues 11–18 (SLRRDSFN), 77–80 (EYNR), and Ser113 contribute to the FMN site.

This sequence belongs to the SsuE family. Homotetramer. The cofactor is FMN.

It catalyses the reaction 2-hydroxy-1,4-benzoquinone + NADH + 2 H(+) = benzene-1,2,4-triol + NAD(+). Involved in the metabolism of 4-aminophenol. Catalyzes the reduction of the auto-oxidation product 2-hydroxy-1,4-benzoquinone back to hydroxyquinol. Has a broad substrate specificity toward benzoquinones, converting them to the corresponding 1,4-benzenediols. This Burkholderia sp protein is 2-hydroxy-1,4-benzoquinone reductase.